The chain runs to 218 residues: Ras-related protein Rab-27B (218 aa).

At Thr2 the chain carries N-acetylthreonine. 16-24 (GDSGVGKTT) provides a ligand contact to GTP. The short motif at 38–46 (FITTVGIDF) is the Effector region element. GTP is bound by residues 74 to 78 (DTAGQ), 133 to 136 (NKAD), and 163 to 165 (SAA). Cys123 and Cys188 are oxidised to a cystine. Residues 194-218 (IPDTVNGGNSGNLDGEKPPEKKCIC) are disordered. The span at 207–218 (DGEKPPEKKCIC) shows a compositional bias: basic and acidic residues. S-geranylgeranyl cysteine attachment occurs at residues Cys216 and Cys218. Residue Cys218 is modified to Cysteine methyl ester.

The protein belongs to the small GTPase superfamily. Rab family. As to quaternary structure, interacts with SYTL2, SYTL4, MYRIP and MLPH. Interacts with RPH3A and RPH3A. Interacts (GDP-bound form preferentially) with DENND10. In terms of tissue distribution, expressed primarily in testis.

It is found in the membrane. The protein resides in the late endosome. It catalyses the reaction GTP + H2O = GDP + phosphate + H(+). Regulated by guanine nucleotide exchange factors (GEFs) which promote the exchange of bound GDP for free GTP, GTPase activating proteins (GAPs) which increase the GTP hydrolysis activity, and GDP dissociation inhibitors which inhibit the dissociation of the nucleotide from the GTPase. Activated by GEFs such as DENND10. Small GTPase which cycles between active GTP-bound and inactive GDP-bound states. In its active state, binds to a variety of effector proteins to regulate homeostasis of late endocytic pathway, including endosomal positioning, maturation and secretion. Plays a role in NTRK2/TRKB axonal anterograde transport by facilitating the association of NTRK2/TRKB with KLC1. May be involved in targeting uroplakins to urothelial apical membranes. The polypeptide is Ras-related protein Rab-27B (RAB27B) (Homo sapiens (Human)).